The primary structure comprises 538 residues: Putative outer membrane porin BglH (538 aa).

A signal peptide spans 1-25; that stretch reads MFRRNLITSAILLMAPLAFSAQSLA. Residues 52-82 form a disordered region; it reads KDEEKKKYTPATVNRSVSTNDQGYAANPFPT. Over residues 62-73 the composition is skewed to polar residues; it reads ATVNRSVSTNDQ.

The protein belongs to the porin LamB (TC 1.B.3) family.

It localises to the cell outer membrane. Functionally, may be a sugar porin with a broad carbohydrate specificity. The sequence is that of Putative outer membrane porin BglH (bglH) from Shigella sonnei (strain Ss046).